The primary structure comprises 1133 residues: MLAYCVQDATVVDVEKRRNPSKHYVYIINVTWSDSTSQTIYRRYSKFFDLQMQLLDKFPIEGGQKDPKQRIIPFLPGKILFRRSHIRDVAVKRLKPIDEYCRALVRLPPHISQCDEVFRFFEARPEDVNPPKEDYGSSKRKSVWLSSWAESPKKDVTGADATAEPMILEQYVVVSNYKKQENSELSLQAGEVVDVIEKNESGWWFVSTSEEQGWVPATYLEAQNGTRDDSDINTSKTGEVSKRRKAHLRRLDRRWTLGGMVNRQHSREEKYVTVQPYTSQSKDEIGFEKGVTVEVIRKNLEGWWYIRYLGKEGWAPASYLKKAKDDLPTRKKNLAGPVEIIGNIMEISNLLNKKASGDKETPPAEGEGHEAPIAKKEISLPILCNASNGSAVGVPDRTVSRLAQGSPAVARIAPQRAQISSPNLRTRPPPRRESSLGFQLPKPPEPPSVEVEYYTIAEFQSCISDGISFRGGQKAEVIDKNSGGWWYVQIGEKEGWAPASYIDKRKKPNLSRRTSTLTRPKVPPPAPPSKPKEAEEGPTGASESQDSPRKLKYEEPEYDIPAFGFDSEPELSEEPVEDRASGERRPAQPHRPSPASSLQRARFKVGESSEDVALEEETIYENEGFRPYAEDTLSARGSSGDSDSPGSSSLSLTRKNSPKSGSPKSSSLLKLKAEKNAQAEMGKNHSSASFSSSITINTTCCSSSSSSSSSLSKTSGDLKPRSASDAGIRGTPKVRAKKDADANAGLTSCPRAKPSVRPKPFLNRAESQSQEKMDISTLRRQLRPTGQLRGGLKGSKSEDSELPPQTASEAPSEGSRRSSSDLITLPATTPPCPTKKEWEGPATSYMTCSAYQKVQDSEISFPAGVEVQVLEKQESGWWYVRFGELEGWAPSHYLVLDENEQPDPSGKELDTVPAKGRQNEGKSDSLEKIERRVQALNTVNQSKKATPPIPSKPPGGFGKTSGTPAVKMRNGVRQVAVRPQSVFVSPPPKDNNLSCALRRNESLTATDGLRGVRRNSSFSTARSAAAEAKGRLAERAASQGSDSPLLPAQRNSIPVSPVRPKPIEKSQFIHNNLKDVYVSIADYEGDEETAGFQEGVSMEVLERNPNGWWYCQILDGVKPFKGWVPSNYLEKKN.

The region spanning 4-128 (YCVQDATVVD…RFFEARPEDV (125 aa)) is the PX domain. Residues 166-225 (MILEQYVVVSNYKKQENSELSLQAGEVVDVIEKNESGWWFVSTSEEQGWVPATYLEAQNG) enclose the SH3 1 domain. Thr-256 carries the post-translational modification Phosphothreonine. Positions 266–325 (SREEKYVTVQPYTSQSKDEIGFEKGVTVEVIRKNLEGWWYIRYLGKEGWAPASYLKKAKD) constitute an SH3 2 domain. Ser-406 and Ser-421 each carry phosphoserine. Disordered regions lie at residues 415 to 446 (QRAQ…PPEP), 505 to 840 (RKKP…EWEG), 899 to 924 (NEQP…GKSD), and 941 to 964 (QSKK…SGTP). The SH3 3 domain occupies 448 to 507 (SVEVEYYTIAEFQSCISDGISFRGGQKAEVIDKNSGGWWYVQIGEKEGWAPASYIDKRKK). The span at 546–555 (DSPRKLKYEE) shows a compositional bias: basic and acidic residues. Phosphoserine is present on residues Ser-547 and Ser-567. Acidic residues predominate over residues 567 to 576 (SEPELSEEPV). A compositionally biased stretch (basic and acidic residues) spans 577 to 586 (EDRASGERRP). Residue Ser-593 is modified to Phosphoserine. The segment covering 608 to 620 (SSEDVALEEETIY) has biased composition (acidic residues). 3 stretches are compositionally biased toward low complexity: residues 634 to 652 (SARG…SLSL), 658 to 670 (PKSG…SLLK), and 686 to 715 (SSAS…SKTS). Ser-644 is modified (phosphoserine). At Thr-731 the chain carries Phosphothreonine. 3 positions are modified to phosphoserine: Ser-767, Ser-769, and Ser-819. The residue at position 829 (Thr-829) is a Phosphothreonine. In terms of domain architecture, SH3 4 spans 840–899 (GPATSYMTCSAYQKVQDSEISFPAGVEVQVLEKQESGWWYVRFGELEGWAPSHYLVLDEN). Positions 917–946 (RQNEGKSDSLEKIERRVQALNTVNQSKKAT) form a coiled coil. Ser-1002, Ser-1016, Ser-1017, and Ser-1038 each carry phosphoserine. A disordered region spans residues 1029-1059 (KGRLAERAASQGSDSPLLPAQRNSIPVSPVR). One can recognise an SH3 5 domain in the interval 1072–1133 (NLKDVYVSIA…VPSNYLEKKN (62 aa)).

Belongs to the SH3PXD2 family. In terms of assembly, interacts (via N-terminus) with CYBA. Interacts with ADAM12, ADAM15 and ADAM19. Interacts with NOXO1. Interacts (via SH3 domains) with NOXA1. Interacts with FASLG. Interacts (via PX domain) with RAB40B (GTP-bound); interaction promotes invadopodia-mediated extracellular matrix degradation. Post-translationally, tyrosine phosphorylated by SRC. Phosphorylation plays a regulatory role in the protein localization. The intramolecular interaction of the PX domain with the third SH3 domain maintains the protein in the cytoplasm and phosphorylation disrupts this interaction, resulting in the redistribution of the protein from cytoplasm to the perimembrane region. Phosphorylated on serine upon DNA damage, probably by ATM or ATR. Found in several cancer cell lines, particularly invasive breast carcinomas and melanomas.

The protein localises to the cytoplasm. The protein resides in the cell projection. It localises to the podosome. Its function is as follows. Adapter protein involved in invadopodia and podosome formation, extracellular matrix degradation and invasiveness of some cancer cells. Binds matrix metalloproteinases (ADAMs), NADPH oxidases (NOXs) and phosphoinositides. Acts as an organizer protein that allows NOX1- or NOX3-dependent reactive oxygen species (ROS) generation and ROS localization. In association with ADAM12, mediates the neurotoxic effect of amyloid-beta peptide. The protein is SH3 and PX domain-containing protein 2A of Homo sapiens (Human).